A 233-amino-acid chain; its full sequence is Large ribosomal subunit protein uL2 (233 aa).

Residues 194–233 are disordered; the sequence is HPHGGGNHQHVGRPSTVGRGTPPGRKVGRLSPKRRKKYGR. Residues 219–233 are compositionally biased toward basic residues; the sequence is KVGRLSPKRRKKYGR.

The protein belongs to the universal ribosomal protein uL2 family. In terms of assembly, part of the 50S ribosomal subunit. Forms a bridge to the 30S subunit in the 70S ribosome.

One of the primary rRNA binding proteins. Required for association of the 30S and 50S subunits to form the 70S ribosome, for tRNA binding and peptide bond formation. It has been suggested to have peptidyltransferase activity; this is somewhat controversial. Makes several contacts with the 16S rRNA in the 70S ribosome. In Picrophilus torridus (strain ATCC 700027 / DSM 9790 / JCM 10055 / NBRC 100828 / KAW 2/3), this protein is Large ribosomal subunit protein uL2.